The chain runs to 155 residues: Nucleosome assembly protein 1-like 5 (155 aa).

Residues 1 to 16 show a composition bias toward basic and acidic residues; that stretch reads MADPEKQGPAESRAED. Positions 1 to 60 are disordered; that stretch reads MADPEKQGPAESRAEDEVMEGAQGGEDAATGDSATAPAAEEPQAPAENAPKPKNDFIESL. A compositionally biased stretch (low complexity) spans 27-49; sequence DAATGDSATAPAAEEPQAPAENA. Residues 68–94 are a coiled coil; the sequence is VLALKKLQKRCDKIEAKFDKEFQALEK. A disordered region spans residues 119 to 155; that stretch reads WTLEGEDDEDDEEEEDEEEEEEEAAAGATGGPDSAEK. Positions 122-142 are enriched in acidic residues; the sequence is EGEDDEDDEEEEDEEEEEEEA.

The protein belongs to the nucleosome assembly protein (NAP) family.

It localises to the nucleus. In Rattus norvegicus (Rat), this protein is Nucleosome assembly protein 1-like 5 (Nap1l5).